Here is a 93-residue protein sequence, read N- to C-terminus: Large ribosomal subunit protein eL29 (93 aa).

Over residues 1 to 31 the composition is skewed to basic residues; the sequence is MAKSKNHSTHHKNRKDHRNGIKKAVVHKKTS. The tract at residues 1–33 is disordered; sequence MAKSKNHSTHHKNRKDHRNGIKKAVVHKKTSSK.

The protein belongs to the eukaryotic ribosomal protein eL29 family.

The sequence is that of Large ribosomal subunit protein eL29 (rpl29) from Dictyostelium discoideum (Social amoeba).